Consider the following 247-residue polypeptide: Probable transcriptional regulatory protein ECA2494 (247 aa).

It belongs to the TACO1 family.

It localises to the cytoplasm. The polypeptide is Probable transcriptional regulatory protein ECA2494 (Pectobacterium atrosepticum (strain SCRI 1043 / ATCC BAA-672) (Erwinia carotovora subsp. atroseptica)).